The sequence spans 592 residues: A-type ATP synthase subunit A (592 aa).

234-241 (GGFGTGKT) contacts ATP.

Belongs to the ATPase alpha/beta chains family. In terms of assembly, has multiple subunits with at least A(3), B(3), C, D, E, F, H, I and proteolipid K(x).

It is found in the cell membrane. The enzyme catalyses ATP + H2O + 4 H(+)(in) = ADP + phosphate + 5 H(+)(out). In terms of biological role, component of the A-type ATP synthase that produces ATP from ADP in the presence of a proton gradient across the membrane. The A chain is the catalytic subunit. The sequence is that of A-type ATP synthase subunit A from Cenarchaeum symbiosum (strain A).